Reading from the N-terminus, the 1010-residue chain is ATP-dependent DNA/RNA helicase DHX36 (1010 aa).

Positions 1-54 (MSYDYHQNWGRDGGPRSSGGGYGGSYGGSHGGGHGGNRGSGGGGGGGGGRGGRG) are required for recruitment to cytoplasmic stress granules. The tract at residues 1–63 (MSYDYHQNWG…GRHPGHLKGR (63 aa)) is disordered. Positions 1 to 107 (MSYDYHQNWG…IVQLLHSVQT (107 aa)) are required for the pre-miR-134 transport. The necessary for nuclear and nucleolar caps localizations stretch occupies residues 1 to 202 (MSYDYHQNWG…KKTDLRYIEM (202 aa)). Over residues 16–51 (RSSGGGYGGSYGGSHGGGHGGNRGSGGGGGGGGGRG) the composition is skewed to gly residues. The segment at 56-78 (HPGHLKGREIGLWYAKKQGQKNK) is DSM (DHX36-specific motif). Positions 56–108 (HPGHLKGREIGLWYAKKQGQKNKEAERQERAVVHMDERREEQIVQLLHSVQTK) are required for G4-DNA- and G4-RNA-binding. RecA-like domain stretches follow at residues 109–388 (NDKD…MIHI) and 389–630 (PGFT…DYQL). In terms of domain architecture, Helicase ATP-binding spans 219 to 389 (VNMIDNHQVT…FGNCPMIHIP (171 aa)). An ATP-binding site is contributed by 235–240 (GCGKTT). The tract at residues 267–319 (RRISAISVAERVAAERAESCGNGNSTGYQIRLQSRLPRKQGSILYCTTGIILQ) is necessary for interaction with single-stranded DNA at the 3'-end of the G4-DNA structure. The DEAH box motif lies at 336-339 (DEIH). The Mg(2+) site is built by E337 and H339. One can recognise a Helicase C-terminal domain in the interval 479–649 (ALIRYIVLEE…ELCLQIKILR (171 aa)). The interval 500–559 (WDNISTLHDLLMSQVMFKSDKFIIIPLHSLMPTVNQTQVFKRTPPGVRKIVIATNIAETS) is necessary for interaction with single-stranded DNA at the 3'-end of the G4-DNA structure. Residues 519–530 (DKFIIIPLHSLM) carry the Nuclear localization signal motif. Residues S559 and 604-607 (RAGR) contribute to the ATP site. Residues 631-700 (PEILRTPLEE…LGVHLARLPV (70 aa)) form a WH domain region. Necessary for interaction with single-stranded DNA at the 3'-end of the G4-DNA structure stretches follow at residues 640–699 (ELCL…ARLP), 851–862 (NLGKKRKMVKVY), and 872–902 (HPKSVNVEQTEFNYNWLIYHLKMRTSSIYLY). The interval 843-907 (PKVAKIRLNL…SIYLYDCTEV (65 aa)) is OB-fold-like subdomains. Residue K949 is modified to N6-acetyllysine. S965 bears the Phosphoserine mark.

As to quaternary structure, found in a multi-helicase-TICAM1 complex at least composed of DHX36, DDX1, DDX21 and TICAM1; this complex exists in resting cells with or without dsRNA poly(I:C) ligand stimulation. Interacts (via C-terminus) with TICAM1 (via TIR domain). Interacts (via C-terminus) with DDX21; this interaction serves as bridges to TICAM1. Interacts with TERT; this interaction is dependent on the ability of DHX36 to bind to the G-quadruplex RNA (G4-RNA) structure present in the telomerase RNA template component (TERC). Interacts with DKC1; this interaction is dependent on the ability of DHX36 to bind to the G4-RNA structure present in TERC. Interacts with PARN; this interaction stimulates PARN to enhance uPA mRNA decay. Interacts with EXOSC3; this interaction occurs in a RNase-insensitive manner. Interacts with EXOSC10; this interaction occurs in a RNase-insensitive manner. Interacts with ILF3; this interaction occurs in a RNA-dependent manner. Interacts with ELAVL1; this interaction occurs in an RNA-dependent manner. Interacts with DDX5; this interaction occurs in a RNA-dependent manner. Interacts with DDX17; this interaction occurs in a RNA-dependent manner. Interacts with HDAC1; this interaction occurs in a RNA-dependent manner. Interacts with HDAC3; this interaction occurs in a RNA-dependent manner. Interacts with HDAC4. Interacts with AGO1. Interacts with AGO2. Interacts with ERCC6. The cofactor is Mg(2+).

Its subcellular location is the nucleus. The protein resides in the cytoplasm. The protein localises to the cytosol. It localises to the stress granule. It is found in the nucleus speckle. Its subcellular location is the chromosome. The protein resides in the telomere. The protein localises to the mitochondrion. It localises to the perikaryon. It is found in the cell projection. Its subcellular location is the dendrite. The protein resides in the axon. It carries out the reaction ATP + H2O = ADP + phosphate + H(+). Its activity is regulated as follows. ATPase activity is enhanced in the presence of homomeric poly(U) RNAs, but not by double-stranded DNA (dsDNA), double-stranded RNA (dsRNA) and tRNA. Its function is as follows. Multifunctional ATP-dependent helicase that unwinds G-quadruplex (G4) structures. Plays a role in many biological processes such as genomic integrity, gene expression regulations and as a sensor to initiate antiviral responses. G4 structures correspond to helical structures containing guanine tetrads. Binds with high affinity to and unwinds G4 structures that are formed in nucleic acids (G4-DNA and G4-RNA). Plays a role in genomic integrity. Converts the G4-RNA structure present in telomerase RNA template component (TREC) into a double-stranded RNA to promote P1 helix formation that acts as a template boundary ensuring accurate reverse transcription. Plays a role in transcriptional regulation. Resolves G4-DNA structures in promoters of genes, such as YY1, KIT/c-kit and ALPL and positively regulates their expression. Plays a role in post-transcriptional regulation. Unwinds a G4-RNA structure located in the 3'-UTR polyadenylation site of the pre-mRNA TP53 and stimulates TP53 pre-mRNA 3'-end processing in response to ultraviolet (UV)-induced DNA damage. Binds to the precursor-microRNA-134 (pre-miR-134) terminal loop and regulates its transport into the synapto-dendritic compartment. Involved in the pre-miR-134-dependent inhibition of target gene expression and the control of dendritic spine size. Plays a role in the regulation of cytoplasmic mRNA translation and mRNA stability. Binds to both G4-RNA structures and alternative non-quadruplex-forming sequence within the 3'-UTR of the PITX1 mRNA regulating negatively PITX1 protein expression. Binds to both G4-RNA structure in the 5'-UTR and AU-rich elements (AREs) localized in the 3'-UTR of NKX2-5 mRNA to either stimulate protein translation or induce mRNA decay in an ELAVL1-dependent manner, respectively. Also binds to ARE sequences present in several mRNAs mediating exosome-mediated 3'-5' mRNA degradation. Involved in cytoplasmic urokinase-type plasminogen activator (uPA) mRNA decay. Component of a multi-helicase-TICAM1 complex that acts as a cytoplasmic sensor of viral double-stranded RNA (dsRNA) and plays a role in the activation of a cascade of antiviral responses including the induction of pro-inflammatory cytokines via the adapter molecule TICAM1. Required for the early embryonic development and hematopoiesis. Involved in the regulation of cardioblast differentiation and proliferation during heart development. Involved in spermatogonia differentiation. May play a role in ossification. The sequence is that of ATP-dependent DNA/RNA helicase DHX36 from Bos taurus (Bovine).